Reading from the N-terminus, the 132-residue chain is Large ribosomal subunit protein bL17 (132 aa).

The protein belongs to the bacterial ribosomal protein bL17 family. Part of the 50S ribosomal subunit. Contacts protein L32.

The chain is Large ribosomal subunit protein bL17 from Variovorax paradoxus (strain S110).